The following is a 357-amino-acid chain: Protein pelota homolog (357 aa).

It belongs to the eukaryotic release factor 1 family. Pelota subfamily. In terms of assembly, monomer. Requires a divalent metal cation as cofactor.

Its subcellular location is the cytoplasm. In terms of biological role, may function in recognizing stalled ribosomes, interact with stem-loop structures in stalled mRNA molecules, and effect endonucleolytic cleavage of the mRNA. May play a role in the release non-functional ribosomes and degradation of damaged mRNAs. Has endoribonuclease activity. The sequence is that of Protein pelota homolog from Methanocella arvoryzae (strain DSM 22066 / NBRC 105507 / MRE50).